Reading from the N-terminus, the 25-residue chain is Snaclec bothroalternin subunit alpha/beta (25 aa).

The region spanning 1–25 (DCPSDWSNHEGHCYRVFNEWMNWAD) is the C-type lectin domain. Residues cysteine 2 and cysteine 13 are joined by a disulfide bond.

This sequence belongs to the snaclec family. Heterodimer of subunits alpha and beta; disulfide-linked. In terms of tissue distribution, expressed by the venom gland.

The protein localises to the secreted. Thrombin (F2) inhibitor that inhibits aggregation of rabbit platelets induced by alpha-thrombin. In Bothrops alternatus (Urutu), this protein is Snaclec bothroalternin subunit alpha/beta.